An 82-amino-acid polypeptide reads, in one-letter code: RNA-binding protein Hfq (82 aa).

The 61-residue stretch at 11–71 folds into the Sm domain; it reads DTFLNHVRKT…ISTIMPGAPI (61 aa).

Belongs to the Hfq family. Homohexamer.

Its function is as follows. RNA chaperone that binds small regulatory RNA (sRNAs) and mRNAs to facilitate mRNA translational regulation in response to envelope stress, environmental stress and changes in metabolite concentrations. Also binds with high specificity to tRNAs. The polypeptide is RNA-binding protein Hfq (Rhodopseudomonas palustris (strain BisA53)).